The primary structure comprises 312 residues: Acetyl-coenzyme A carboxylase carboxyl transferase subunit alpha (312 aa).

Residues 36 to 286 (RLDKEVKSIY…KEYFLDALRT (251 aa)) form the CoA carboxyltransferase C-terminal domain.

Belongs to the AccA family. In terms of assembly, acetyl-CoA carboxylase is a heterohexamer composed of biotin carboxyl carrier protein (AccB), biotin carboxylase (AccC) and two subunits each of ACCase subunit alpha (AccA) and ACCase subunit beta (AccD).

The protein localises to the cytoplasm. The enzyme catalyses N(6)-carboxybiotinyl-L-lysyl-[protein] + acetyl-CoA = N(6)-biotinyl-L-lysyl-[protein] + malonyl-CoA. It participates in lipid metabolism; malonyl-CoA biosynthesis; malonyl-CoA from acetyl-CoA: step 1/1. Its function is as follows. Component of the acetyl coenzyme A carboxylase (ACC) complex. First, biotin carboxylase catalyzes the carboxylation of biotin on its carrier protein (BCCP) and then the CO(2) group is transferred by the carboxyltransferase to acetyl-CoA to form malonyl-CoA. This is Acetyl-coenzyme A carboxylase carboxyl transferase subunit alpha from Helicobacter pylori (strain HPAG1).